Here is a 218-residue protein sequence, read N- to C-terminus: Uracil-DNA glycosylase (218 aa).

D68 functions as the Proton acceptor in the catalytic mechanism.

It belongs to the uracil-DNA glycosylase (UDG) superfamily. UNG family. As to quaternary structure, homodimer. Interacts with protein OPG148. Component of the Uracil-DNA glycosylase(UDG)-OPG148-polymerase complex; OPG148 and UDG form a heterodimeric processivity factor that associates with OPG71 to form the processive polymerase holoenzyme.

The catalysed reaction is Hydrolyzes single-stranded DNA or mismatched double-stranded DNA and polynucleotides, releasing free uracil.. Functionally, plays an essential role in viral replication as a component of the DNA polymerase processivity factor. Excises uracil residues from the DNA which can arise as a result of misincorporation of dUMP residues by DNA polymerase or due to deamination of cytosine. This chain is Uracil-DNA glycosylase (OPG116), found in Vaccinia virus (strain Ankara) (VACV).